The primary structure comprises 66 residues: Large ribosomal subunit protein bL31 (66 aa).

Residues C16, C18, C36, and C39 each coordinate Zn(2+).

It belongs to the bacterial ribosomal protein bL31 family. Type A subfamily. Part of the 50S ribosomal subunit. Zn(2+) is required as a cofactor.

Its function is as follows. Binds the 23S rRNA. The sequence is that of Large ribosomal subunit protein bL31 from Leptospira biflexa serovar Patoc (strain Patoc 1 / Ames).